The sequence spans 309 residues: Tyrosine recombinase XerD (309 aa).

Residues 3–88 (MRASLAIENF…ALRQFFRFLY (86 aa)) form the Core-binding (CB) domain. The Tyr recombinase domain maps to 109–302 (PLPKIMSVEN…LEERLHKLVS (194 aa)). Catalysis depends on residues R158, K182, H254, R257, and H280. Catalysis depends on Y289, which acts as the O-(3'-phospho-DNA)-tyrosine intermediate.

The protein belongs to the 'phage' integrase family. XerD subfamily. As to quaternary structure, forms a cyclic heterotetrameric complex composed of two molecules of XerC and two molecules of XerD.

The protein localises to the cytoplasm. Functionally, site-specific tyrosine recombinase, which acts by catalyzing the cutting and rejoining of the recombining DNA molecules. The XerC-XerD complex is essential to convert dimers of the bacterial chromosome into monomers to permit their segregation at cell division. It also contributes to the segregational stability of plasmids. The polypeptide is Tyrosine recombinase XerD (Brucella melitensis biotype 1 (strain ATCC 23456 / CCUG 17765 / NCTC 10094 / 16M)).